Reading from the N-terminus, the 197-residue chain is 5'-deoxynucleotidase plu3092 (197 aa).

Substrate contacts are provided by residues 16–17 (RW) and His-31. The 113-residue stretch at 28–140 (VSEHSLQVAF…IKQADSLCAY (113 aa)) folds into the HD domain. A divalent metal cation contacts are provided by His-31, His-66, and Asp-67. Residues Asp-67, 75 to 78 (DLPT), and Asp-135 each bind substrate. An a divalent metal cation-binding site is contributed by Asp-135.

Belongs to the 5DNU family. As to quaternary structure, homodimer. A divalent metal cation is required as a cofactor.

The protein localises to the cytoplasm. The catalysed reaction is a 2'-deoxyribonucleoside 5'-phosphate + H2O = a 2'-deoxyribonucleoside + phosphate. Functionally, catalyzes the strictly specific dephosphorylation of 2'-deoxyribonucleoside 5'-monophosphates. In Photorhabdus laumondii subsp. laumondii (strain DSM 15139 / CIP 105565 / TT01) (Photorhabdus luminescens subsp. laumondii), this protein is 5'-deoxynucleotidase plu3092.